Here is a 286-residue protein sequence, read N- to C-terminus: Pyridoxal kinase PdxY (286 aa).

Residues serine 9 and 44-45 (MQ) contribute to the substrate site. Residues aspartate 111, glutamate 147, and lysine 180 each contribute to the ATP site. Residue aspartate 221 coordinates substrate.

Belongs to the pyridoxine kinase family. PdxY subfamily. As to quaternary structure, homodimer. Mg(2+) serves as cofactor.

The enzyme catalyses pyridoxal + ATP = pyridoxal 5'-phosphate + ADP + H(+). It functions in the pathway cofactor metabolism; pyridoxal 5'-phosphate salvage; pyridoxal 5'-phosphate from pyridoxal: step 1/1. Pyridoxal kinase involved in the salvage pathway of pyridoxal 5'-phosphate (PLP). Catalyzes the phosphorylation of pyridoxal to PLP. This is Pyridoxal kinase PdxY from Burkholderia orbicola (strain AU 1054).